The following is a 199-amino-acid chain: Putative pseudouridine methyltransferase (199 aa).

The S-adenosyl-L-methionine site is built by M132 and C186.

Belongs to the methyltransferase superfamily. TrmY family.

The protein resides in the cytoplasm. The polypeptide is Putative pseudouridine methyltransferase (Vibrio atlanticus (strain LGP32) (Vibrio splendidus (strain Mel32))).